Reading from the N-terminus, the 463-residue chain is Hexokinase-7 (463 aa).

In terms of domain architecture, Hexokinase spans 7–456 (AAAEQVVAAL…SGLGAALIAA (450 aa)). Residues 62-199 (NGTEEGLFYA…GLDMRVSALI (138 aa)) are hexokinase small subdomain. 3 residues coordinate ADP: G76, T77, and N78. 4 residues coordinate D-glucose: T165, K166, N200, and D201. The segment at 200–445 (NDTVGTLAAG…KSVAVKLAND (246 aa)) is hexokinase large subdomain. T224 contributes to the ADP binding site. D-glucose-binding residues include N227, E255, and E286. Residue G410 participates in ADP binding.

Belongs to the hexokinase family. As to expression, expressed in roots, leaves, flowers, immature seeds and seed coat.

The protein localises to the cytoplasm. It carries out the reaction a D-hexose + ATP = a D-hexose 6-phosphate + ADP + H(+). The enzyme catalyses D-fructose + ATP = D-fructose 6-phosphate + ADP + H(+). It catalyses the reaction D-glucose + ATP = D-glucose 6-phosphate + ADP + H(+). Its pathway is carbohydrate metabolism; hexose metabolism. It participates in carbohydrate degradation; glycolysis; D-glyceraldehyde 3-phosphate and glycerone phosphate from D-glucose: step 1/4. Its function is as follows. Fructose and glucose phosphorylating enzyme. Functions in sugar signaling via a glycolysis-dependent manner under aerobic conditions, but its signaling role is suppressed when oxygen is deficient. This is Hexokinase-7 (HXK7) from Oryza sativa subsp. japonica (Rice).